A 144-amino-acid chain; its full sequence is Small ribosomal subunit protein uS12 (144 aa).

D103 bears the 3-methylthioaspartic acid mark. The segment at 121 to 144 (VANRKQGRSKYGTKKASAVPAKKK) is disordered.

It belongs to the universal ribosomal protein uS12 family. Part of the 30S ribosomal subunit. Contacts proteins S8 and S17. May interact with IF1 in the 30S initiation complex.

Functionally, with S4 and S5 plays an important role in translational accuracy. Its function is as follows. Interacts with and stabilizes bases of the 16S rRNA that are involved in tRNA selection in the A site and with the mRNA backbone. Located at the interface of the 30S and 50S subunits, it traverses the body of the 30S subunit contacting proteins on the other side and probably holding the rRNA structure together. The combined cluster of proteins S8, S12 and S17 appears to hold together the shoulder and platform of the 30S subunit. This chain is Small ribosomal subunit protein uS12, found in Roseiflexus castenholzii (strain DSM 13941 / HLO8).